A 427-amino-acid polypeptide reads, in one-letter code: DNA topoisomerase 6 subunit A (427 aa).

A Topo IIA-type catalytic domain is found at 76 to 209 (LSLSSVQTEI…LNVIAAEKGV (134 aa)). Tyr170 acts as the O-(5'-phospho-DNA)-tyrosine intermediate in catalysis. The Mg(2+) site is built by Glu256 and Asp308.

Belongs to the TOP6A family. As to quaternary structure, homodimer. Heterotetramer of two TOP6A and two TOP6B subunits. Interacts with BIN4 and RHL1. Requires Mg(2+) as cofactor. As to expression, highly expressed in leaves, stems, flowers and seedlings.

The protein resides in the nucleus. The enzyme catalyses ATP-dependent breakage, passage and rejoining of double-stranded DNA.. In terms of biological role, component of the DNA topoisomerase VI involved in chromatin organization and progression of endoreduplication cycles. Relaxes both positive and negative superturns and exhibits a strong decatenase activity. Involved in cell-elongation processes. The polypeptide is DNA topoisomerase 6 subunit A (Arabidopsis thaliana (Mouse-ear cress)).